We begin with the raw amino-acid sequence, 371 residues long: Ligninase LG5 (371 aa).

Positions 1 to 21 (MAFKKLLAVLTAALSLRAAQG) are cleaved as a signal peptide. Positions 22 to 27 (AAVEKR) are excised as a propeptide. 4 disulfides stabilise this stretch: C30–C42, C41–C311, C61–C146, and C275–C344. H74 (proton acceptor) is an active-site residue. 4 residues coordinate Ca(2+): D75, G92, D94, and S96. H202 contacts heme b. Ca(2+)-binding residues include S203, D220, T222, I225, and D227. N-linked (GlcNAc...) asparagine glycosylation is present at N283. The segment at 349–371 (FPTLSTLPGPATSVARIPPPPGA) is disordered.

This sequence belongs to the peroxidase family. Ligninase subfamily. Ca(2+) is required as a cofactor. It depends on heme b as a cofactor.

It carries out the reaction 1-(3,4-dimethoxyphenyl)-2-(2-methoxyphenoxy)propane-1,3-diol + H2O2 = 3,4-dimethoxybenzaldehyde + guaiacol + glycolaldehyde + H2O. The catalysed reaction is 2 (3,4-dimethoxyphenyl)methanol + H2O2 = 2 (3,4-dimethoxyphenyl)methanol radical + 2 H2O. The protein operates within secondary metabolite metabolism; lignin degradation. Functionally, depolymerization of lignin. Catalyzes the C(alpha)-C(beta) cleavage of the propyl side chains of lignin. The sequence is that of Ligninase LG5 (GLG5) from Phanerodontia chrysosporium (White-rot fungus).